The following is a 204-amino-acid chain: Ribosomal RNA small subunit methyltransferase J (204 aa).

Residues Arg-55–Asp-56, Glu-71–Arg-72, and Asp-123 each bind S-adenosyl-L-methionine.

This sequence belongs to the methyltransferase superfamily. RsmJ family.

It is found in the cytoplasm. It catalyses the reaction guanosine(1516) in 16S rRNA + S-adenosyl-L-methionine = N(2)-methylguanosine(1516) in 16S rRNA + S-adenosyl-L-homocysteine + H(+). In terms of biological role, specifically methylates the guanosine in position 1516 of 16S rRNA. This is Ribosomal RNA small subunit methyltransferase J from Rhodopseudomonas palustris (strain ATCC BAA-98 / CGA009).